A 290-amino-acid polypeptide reads, in one-letter code: 2-dehydropantoate 2-reductase (290 aa).

NADP(+)-binding positions include 8-13, Asn98, and Ala124; that span reads GPGAVG. Position 98 (Asn98) interacts with substrate. Lys175 functions as the Proton donor in the catalytic mechanism. The substrate site is built by Asn179 and Ser244. Glu256 provides a ligand contact to NADP(+).

The protein belongs to the ketopantoate reductase family.

It localises to the cytoplasm. It carries out the reaction (R)-pantoate + NADP(+) = 2-dehydropantoate + NADPH + H(+). It functions in the pathway cofactor biosynthesis; (R)-pantothenate biosynthesis; (R)-pantoate from 3-methyl-2-oxobutanoate: step 2/2. In terms of biological role, catalyzes the NADPH-dependent reduction of ketopantoate into pantoic acid. The sequence is that of 2-dehydropantoate 2-reductase from Caulobacter vibrioides (strain ATCC 19089 / CIP 103742 / CB 15) (Caulobacter crescentus).